The sequence spans 238 residues: MTDPVYRRVVIKLSGEYLAGQQGFGIDQPTVDRVADDLIAARHLGTEVAVVIGGGNIVRGVEVSSRGVSRPTGDTMGMLATMMNCLALEAAIERKGTPARTLSAFVMPEISELFTRTAAHKYLAEGRIVLLGGGTGNPFFTTDTTAVLRAAEIGAQAVLKATNVDGVYSADPKKDPTATRFDRLTHSQAIEGGYKVMDATAFALARETSLPIIVFSIAEPGSIGAILRGIGHGTIVAG.

Position 12–15 (12–15 (KLSG)) interacts with ATP. The segment at 20–25 (GQQGFG) is involved in allosteric activation by GTP. Gly-54 contributes to the UMP binding site. Residues Gly-55 and Arg-59 each contribute to the ATP site. UMP is bound by residues Asp-74 and 135 to 142 (TGNPFFTT). Positions 162, 163, 168, and 171 each coordinate ATP.

It belongs to the UMP kinase family. As to quaternary structure, homohexamer.

The protein resides in the cytoplasm. The catalysed reaction is UMP + ATP = UDP + ADP. The protein operates within pyrimidine metabolism; CTP biosynthesis via de novo pathway; UDP from UMP (UMPK route): step 1/1. Allosterically activated by GTP. Inhibited by UTP. In terms of biological role, catalyzes the reversible phosphorylation of UMP to UDP. The sequence is that of Uridylate kinase from Bradyrhizobium diazoefficiens (strain JCM 10833 / BCRC 13528 / IAM 13628 / NBRC 14792 / USDA 110).